The chain runs to 376 residues: Queuine tRNA-ribosyltransferase (376 aa).

Asp93 (proton acceptor) is an active-site residue. Residues 93–97 (DSGGF), Asp147, Gln190, and Gly217 contribute to the substrate site. Residues 248-254 (GVGTPDD) are RNA binding. The active-site Nucleophile is the Asp267. Residues 272–276 (TRSGR) are RNA binding; important for wobble base 34 recognition.

Belongs to the queuine tRNA-ribosyltransferase family. As to quaternary structure, homodimer. Within each dimer, one monomer is responsible for RNA recognition and catalysis, while the other monomer binds to the replacement base PreQ1.

The catalysed reaction is 7-aminomethyl-7-carbaguanine + guanosine(34) in tRNA = 7-aminomethyl-7-carbaguanosine(34) in tRNA + guanine. Its pathway is tRNA modification; tRNA-queuosine biosynthesis. Functionally, catalyzes the base-exchange of a guanine (G) residue with the queuine precursor 7-aminomethyl-7-deazaguanine (PreQ1) at position 34 (anticodon wobble position) in tRNAs with GU(N) anticodons (tRNA-Asp, -Asn, -His and -Tyr). Catalysis occurs through a double-displacement mechanism. The nucleophile active site attacks the C1' of nucleotide 34 to detach the guanine base from the RNA, forming a covalent enzyme-RNA intermediate. The proton acceptor active site deprotonates the incoming PreQ1, allowing a nucleophilic attack on the C1' of the ribose to form the product. After dissociation, two additional enzymatic reactions on the tRNA convert PreQ1 to queuine (Q), resulting in the hypermodified nucleoside queuosine (7-(((4,5-cis-dihydroxy-2-cyclopenten-1-yl)amino)methyl)-7-deazaguanosine). In Rhizobium meliloti (strain 1021) (Ensifer meliloti), this protein is Queuine tRNA-ribosyltransferase.